A 309-amino-acid polypeptide reads, in one-letter code: GTP cyclohydrolase MptA (309 aa).

The protein belongs to the GTP cyclohydrolase IV family. Homodimer. Requires Fe(2+) as cofactor.

The enzyme catalyses GTP + H2O = 7,8-dihydroneopterin 2',3'-cyclic phosphate + formate + diphosphate + H(+). It participates in cofactor biosynthesis; 5,6,7,8-tetrahydromethanopterin biosynthesis. Converts GTP to 7,8-dihydro-D-neopterin 2',3'-cyclic phosphate, the first intermediate in the biosynthesis of coenzyme methanopterin. The polypeptide is GTP cyclohydrolase MptA (Haloquadratum walsbyi (strain DSM 16790 / HBSQ001)).